The sequence spans 287 residues: Gene 31 protein (287 aa).

The disordered stretch occupies residues 13–58 (AGRPAGLPGRGGQPGLAGAEGGEGRAGPGAHGDGVRQGGGLQTGGA). Over residues 20–58 (PGRGGQPGLAGAEGGEGRAGPGAHGDGVRQGGGLQTGGA) the composition is skewed to gly residues.

It belongs to the herpesviridae UL92 family.

This chain is Gene 31 protein (31), found in Equine herpesvirus 2 (strain 86/87) (EHV-2).